The following is a 313-amino-acid chain: Ribosomal RNA small subunit methyltransferase H (313 aa).

S-adenosyl-L-methionine-binding positions include 35-37, D55, F79, D101, and Q108; that span reads GGH.

Belongs to the methyltransferase superfamily. RsmH family.

It is found in the cytoplasm. The catalysed reaction is cytidine(1402) in 16S rRNA + S-adenosyl-L-methionine = N(4)-methylcytidine(1402) in 16S rRNA + S-adenosyl-L-homocysteine + H(+). Its function is as follows. Specifically methylates the N4 position of cytidine in position 1402 (C1402) of 16S rRNA. The protein is Ribosomal RNA small subunit methyltransferase H of Salmonella paratyphi A (strain ATCC 9150 / SARB42).